The sequence spans 1176 residues: Growth-differentiation transition protein 5 (1176 aa).

The N-terminal stretch at 1 to 25 (MKNNFFKKTIILLIFLSIFILYSNA) is a signal peptide. Over 26–913 (DEETITTPPG…DVPANENTLN (888 aa)) the chain is Extracellular. The helical transmembrane segment at 914–934 (LLTIVLPICSAVVVASSVMLG) threads the bilayer. Residues 935–1176 (RLFYKKKFKK…NVGYNVHEYF (242 aa)) are Cytoplasmic-facing. Composition is skewed to low complexity over residues 965 to 974 (SNIENKSESI) and 1053 to 1066 (PQIS…SIPS). Disordered regions lie at residues 965–985 (SNIE…EQKE) and 1050–1080 (VDTP…PPST). The span at 1067 to 1078 (SSPPPPPLPLPP) shows a compositional bias: pro residues.

The protein belongs to the GDT family.

It localises to the membrane. The chain is Growth-differentiation transition protein 5 (gdt5) from Dictyostelium discoideum (Social amoeba).